The chain runs to 213 residues: Ras-related protein RabK1 (213 aa).

Position 14–21 (14–21 (GDRMVGKL)) interacts with GTP. The Effector region signature appears at 36–43 (GNSIPFDF). Residues 61-65 (NTHGS) and 119-122 (TKSD) each bind GTP.

Belongs to the small GTPase superfamily. Rab family.

This is Ras-related protein RabK1 (rabK1) from Dictyostelium discoideum (Social amoeba).